The chain runs to 197 residues: uncharacterized protein (197 aa).

Disordered stretches follow at residues M1–V30 and P115–L174. Residues K21–V30 are compositionally biased toward low complexity. Residues K123–E137 show a composition bias toward acidic residues. Over residues K157–S170 the composition is skewed to basic residues.

This is an uncharacterized protein from Dictyostelium discoideum (Social amoeba).